A 1659-amino-acid chain; its full sequence is Intersectin-2 (1659 aa).

Positions 22–110 (ERTKHDKQFD…PIMKQPPMFS (89 aa)) constitute an EH 1 domain. The 36-residue stretch at 54 to 89 (LPAPVLAEIWALSDLNKDGKMDQQEFSIAMKLIKLK) folds into the EF-hand 1 domain. 5 residues coordinate Ca(2+): aspartate 67, asparagine 69, aspartate 71, lysine 73, and glutamate 78. Phosphoserine occurs at positions 110, 211, and 231. The span at 220 to 231 (STSSTASLSGNS) shows a compositional bias: low complexity. Positions 220 to 242 (STSSTASLSGNSPKTGTSEWAVP) are disordered. Residues 245-334 (SRLKYRQKFN…PELVPPSFRG (90 aa)) form the EH 2 domain. The EF-hand 2 domain occupies 278-313 (LSQTQLATIWTLADIDGDGQLKAEEFILAMHLTDMA). Residues 335-382 (GKQVDSVNGTLPSYQKTQEEEPQKKLPVTFEDKRKANYERGNMELEKR) form a disordered region. The span at 339–350 (DSVNGTLPSYQK) shows a compositional bias: polar residues. Residues 351–382 (TQEEEPQKKLPVTFEDKRKANYERGNMELEKR) are compositionally biased toward basic and acidic residues. Positions 365 to 717 (EDKRKANYER…KAEAKQSETA (353 aa)) form a coiled coil. Tyrosine 554 bears the Phosphotyrosine mark. Threonine 574 carries the phosphothreonine modification. Residues 689 to 713 (KQKRLQEEKSQDKTQEEERKAEAKQ) show a composition bias toward basic and acidic residues. The interval 689-715 (KQKRLQEEKSQDKTQEEERKAEAKQSE) is disordered. The 62-residue stretch at 718–779 (SALVNYRALY…PCNYVEKVLS (62 aa)) folds into the SH3 1 domain. The residue at position 836 (threonine 836) is a Phosphothreonine. Serine 838 and serine 843 each carry phosphoserine. In terms of domain architecture, SH3 2 spans 852-910 (VENLKAQALCSWTAKKENHLNFSKHDVITVLEQQENWWFGEVHGGRGWFPKSYVKLIPG). A Phosphotyrosine modification is found at tyrosine 922. SH3 domains follow at residues 942–1000 (PVGE…PKDQ), 1014–1078 (KKPE…LLGP), and 1088–1147 (HAVC…MTTD). Positions 1170–1357 (KRQGYIHELI…EELCSQVNEG (188 aa)) constitute a DH domain. The 111-residue stretch at 1396–1506 (KLLHSGKLYK…WVQKIKGASE (111 aa)) folds into the PH domain. A C2 domain is found at 1514-1630 (KKREKAYQAR…RTEQESKGPT (117 aa)). Ca(2+)-binding residues include aspartate 1602, serine 1605, and aspartate 1608.

Belongs to a complex that may contain multimers of ITSN1, ITSN2 and EPS15, and different partners according to the step in the endocytic process. Interacts with ADAM15. Interacts with FASLG. Interacts with ANKRD54. Interacts with FCHO2. Ca(2+) serves as cofactor. As to expression, widely expressed in adult tissues.

It localises to the cytoplasm. Adapter protein that may provide indirect link between the endocytic membrane traffic and the actin assembly machinery. May regulate the formation of clathrin-coated vesicles (CCPs). Seems to be involved in CCPs maturation including invagination or budding. Involved in endocytosis of integrin beta-1 (ITGB1) and transferrin receptor (TFR). Plays a role in dendrite formation by melanocytes. This is Intersectin-2 (Itsn2) from Mus musculus (Mouse).